Here is a 467-residue protein sequence, read N- to C-terminus: 2-succinylbenzoate--CoA ligase (467 aa).

It belongs to the ATP-dependent AMP-binding enzyme family. MenE subfamily.

It catalyses the reaction 2-succinylbenzoate + ATP + CoA = 2-succinylbenzoyl-CoA + AMP + diphosphate. It participates in quinol/quinone metabolism; 1,4-dihydroxy-2-naphthoate biosynthesis; 1,4-dihydroxy-2-naphthoate from chorismate: step 5/7. It functions in the pathway quinol/quinone metabolism; menaquinone biosynthesis. Converts 2-succinylbenzoate (OSB) to 2-succinylbenzoyl-CoA (OSB-CoA). In Listeria monocytogenes serovar 1/2a (strain ATCC BAA-679 / EGD-e), this protein is 2-succinylbenzoate--CoA ligase.